Reading from the N-terminus, the 519-residue chain is Spermidine/putrescine import ATP-binding protein PotA (519 aa).

The ABC transporter domain maps to 6 to 401 (LHLRDITKIY…PNSLWVANFI (396 aa)). 39–46 (GPSGCGKT) provides a ligand contact to ATP. Positions 107–270 (RKPKDNVDQS…EQFENKNITR (164 aa)) are insert.

It belongs to the ABC transporter superfamily. Spermidine/putrescine importer (TC 3.A.1.11.1) family. The complex is composed of two ATP-binding proteins (PotA), two transmembrane proteins (PotB and PotC) and a solute-binding protein (PotD).

It localises to the cell membrane. The enzyme catalyses ATP + H2O + polyamine-[polyamine-binding protein]Side 1 = ADP + phosphate + polyamineSide 2 + [polyamine-binding protein]Side 1.. Functionally, part of the ABC transporter complex PotABCD involved in spermidine/putrescine import. Responsible for energy coupling to the transport system. In Ureaplasma parvum serovar 3 (strain ATCC 700970), this protein is Spermidine/putrescine import ATP-binding protein PotA.